The sequence spans 968 residues: RNA polymerase-associated protein RapA (968 aa).

One can recognise a Helicase ATP-binding domain in the interval 163–332 (EVGRRYAPRV…FARLRLLDPD (170 aa)). 176–183 (DEVGLGKT) is a binding site for ATP. The DEAH box motif lies at 278-281 (DEAH). The 165-residue stretch at 491 to 655 (RVDWLIEFLK…EFAEELLNVL (165 aa)) folds into the Helicase C-terminal domain.

This sequence belongs to the SNF2/RAD54 helicase family. RapA subfamily. Interacts with the RNAP. Has a higher affinity for the core RNAP than for the holoenzyme. Its ATPase activity is stimulated by binding to RNAP.

Transcription regulator that activates transcription by stimulating RNA polymerase (RNAP) recycling in case of stress conditions such as supercoiled DNA or high salt concentrations. Probably acts by releasing the RNAP, when it is trapped or immobilized on tightly supercoiled DNA. Does not activate transcription on linear DNA. Probably not involved in DNA repair. The protein is RNA polymerase-associated protein RapA of Shewanella oneidensis (strain ATCC 700550 / JCM 31522 / CIP 106686 / LMG 19005 / NCIMB 14063 / MR-1).